The chain runs to 73 residues: Translation initiation factor IF-1 2 (73 aa).

Residues 1–72 (MAKEELVEFG…TKGRINYRHK (72 aa)) form the S1-like domain.

The protein belongs to the IF-1 family. Component of the 30S ribosomal translation pre-initiation complex which assembles on the 30S ribosome in the order IF-2 and IF-3, IF-1 and N-formylmethionyl-tRNA(fMet); mRNA recruitment can occur at any time during PIC assembly.

It localises to the cytoplasm. In terms of biological role, one of the essential components for the initiation of protein synthesis. Stabilizes the binding of IF-2 and IF-3 on the 30S subunit to which N-formylmethionyl-tRNA(fMet) subsequently binds. Helps modulate mRNA selection, yielding the 30S pre-initiation complex (PIC). Upon addition of the 50S ribosomal subunit IF-1, IF-2 and IF-3 are released leaving the mature 70S translation initiation complex. This Cupriavidus pinatubonensis (strain JMP 134 / LMG 1197) (Cupriavidus necator (strain JMP 134)) protein is Translation initiation factor IF-1 2.